We begin with the raw amino-acid sequence, 424 residues long: STAM-binding protein (424 aa).

The segment at 1 to 127 (MSDHADVSLP…YEQYKERKKK (127 aa)) is interaction with CHMP3. A phosphoserine mark is found at serine 2 and serine 48. The interval 227-231 (PAKPP) is interaction with STAM. Serine 243 bears the Phosphoserine mark. An MPN domain is found at 257–388 (IVVPRNLCSE…LTDYGLQEIS (132 aa)). Histidine 335, histidine 337, aspartate 348, histidine 350, cysteine 390, histidine 396, and histidine 398 together coordinate Zn(2+). The JAMM motif signature appears at 335–348 (HTHPTQTAFLSSVD).

This sequence belongs to the peptidase M67C family. As to quaternary structure, interacts with STAM. Interacts with SMAD6 and SMAD7. Interacts with CHMP3; the interaction appears to relieve the autoinhibition of CHMP3. Interacts with SMURF2 and RNF11; this interaction promotes ubiquitination. It depends on Zn(2+) as a cofactor. Post-translationally, phosphorylated after BMP type I receptor activation. Ubiquitinated by SMURF2 in the presence of RNF11.

Its subcellular location is the nucleus. It is found in the membrane. It localises to the cytoplasm. The protein localises to the early endosome. Inhibited by N-ethylmaleimide. Zinc metalloprotease that specifically cleaves 'Lys-63'-linked polyubiquitin chains. Does not cleave 'Lys-48'-linked polyubiquitin chains. Plays a role in signal transduction for cell growth and MYC induction mediated by IL-2 and GM-CSF. Potentiates BMP (bone morphogenetic protein) signaling by antagonizing the inhibitory action of SMAD6 and SMAD7. Has a key role in regulation of cell surface receptor-mediated endocytosis and ubiquitin-dependent sorting of receptors to lysosomes. Endosomal localization of STAMBP is required for efficient EGFR degradation but not for its internalization. Involved in the negative regulation of PI3K-AKT-mTOR and RAS-MAP signaling pathways. In Rattus norvegicus (Rat), this protein is STAM-binding protein (Stambp).